Here is a 138-residue protein sequence, read N- to C-terminus: Molluscan insulin-related peptide 5 (138 aa).

Positions 1 to 31 (MAGVRLVFTKAFMVTVLLTLLLNIGVKPAEG) are cleaved as a signal peptide. Q32 carries the pyrrolidone carboxylic acid modification. Disulfide bonds link C48/C124, C60/C137, and C123/C128. A propeptide spans 72-84 (DAETGWLLPETMV) (C-beta peptide like). Residues 87 to 111 (NAQTDLDDPLRNIKLSSESALTYLT) constitute a propeptide, C-alpha peptide like. Residue Q114 is modified to Pyrrolidone carboxylic acid.

Belongs to the insulin family. As to quaternary structure, heterodimer of a B chain and an A chain linked by two disulfide bonds. Expressed in the cerebral light-green cells which are giant neuroendocrines cells involved in the control of growth.

It is found in the cytoplasmic vesicle. The protein localises to the secretory vesicle. This chain is Molluscan insulin-related peptide 5, found in Lymnaea stagnalis (Great pond snail).